The sequence spans 31 residues: Cytochrome b6-f complex subunit 6 (31 aa).

The helical transmembrane segment at 4–24 (ITSYFGFLLAALTITSAIFIG) threads the bilayer.

Belongs to the PetL family. The 4 large subunits of the cytochrome b6-f complex are cytochrome b6, subunit IV (17 kDa polypeptide, PetD), cytochrome f and the Rieske protein, while the 4 small subunits are PetG, PetL, PetM and PetN. The complex functions as a dimer.

It is found in the plastid. The protein localises to the chloroplast thylakoid membrane. In terms of biological role, component of the cytochrome b6-f complex, which mediates electron transfer between photosystem II (PSII) and photosystem I (PSI), cyclic electron flow around PSI, and state transitions. PetL is important for photoautotrophic growth as well as for electron transfer efficiency and stability of the cytochrome b6-f complex. This is Cytochrome b6-f complex subunit 6 from Ficus carica (Common fig).